A 178-amino-acid polypeptide reads, in one-letter code: Cytidylate kinase (178 aa).

ATP is bound at residue Gly7–Thr15.

The protein belongs to the cytidylate kinase family. Type 2 subfamily.

The protein localises to the cytoplasm. The enzyme catalyses CMP + ATP = CDP + ADP. The catalysed reaction is dCMP + ATP = dCDP + ADP. This Methanocaldococcus jannaschii (strain ATCC 43067 / DSM 2661 / JAL-1 / JCM 10045 / NBRC 100440) (Methanococcus jannaschii) protein is Cytidylate kinase (cmk).